Here is a 198-residue protein sequence, read N- to C-terminus: Recombination protein RecR (198 aa).

A C4-type zinc finger spans residues 56-71 (CKVCGNFSEEDECVIC). The Toprim domain maps to 79–174 (GVICVVEEPK…RVSKLASGLP (96 aa)).

This sequence belongs to the RecR family.

Functionally, may play a role in DNA repair. It seems to be involved in an RecBC-independent recombinational process of DNA repair. It may act with RecF and RecO. In Tropheryma whipplei (strain TW08/27) (Whipple's bacillus), this protein is Recombination protein RecR.